A 77-amino-acid chain; its full sequence is DinI-like protein in retron Ec67 (77 aa).

It belongs to the DinI family.

In Escherichia coli, this protein is DinI-like protein in retron Ec67.